The following is a 183-amino-acid chain: Hypoxanthine/guanine phosphoribosyltransferase (183 aa).

This sequence belongs to the purine/pyrimidine phosphoribosyltransferase family. Archaeal HPRT subfamily. Homodimer.

Its subcellular location is the cytoplasm. It catalyses the reaction IMP + diphosphate = hypoxanthine + 5-phospho-alpha-D-ribose 1-diphosphate. The catalysed reaction is GMP + diphosphate = guanine + 5-phospho-alpha-D-ribose 1-diphosphate. It participates in purine metabolism; IMP biosynthesis via salvage pathway; IMP from hypoxanthine: step 1/1. Catalyzes a salvage reaction resulting in the formation of IMP that is energically less costly than de novo synthesis. This Methanocaldococcus infernus (strain DSM 11812 / JCM 15783 / ME) protein is Hypoxanthine/guanine phosphoribosyltransferase.